Consider the following 184-residue polypeptide: ATP synthase subunit b 1 (184 aa).

The helical transmembrane segment at 36–55 (NILNLAILVGVLVFYGRKVV) threads the bilayer.

The protein belongs to the ATPase B chain family. F-type ATPases have 2 components, F(1) - the catalytic core - and F(0) - the membrane proton channel. F(1) has five subunits: alpha(3), beta(3), gamma(1), delta(1), epsilon(1). F(0) has four main subunits: a(1), b(1), b'(1) and c(10-14). The alpha and beta chains form an alternating ring which encloses part of the gamma chain. F(1) is attached to F(0) by a central stalk formed by the gamma and epsilon chains, while a peripheral stalk is formed by the delta, b and b' chains.

The protein resides in the cellular thylakoid membrane. In terms of biological role, f(1)F(0) ATP synthase produces ATP from ADP in the presence of a proton or sodium gradient. F-type ATPases consist of two structural domains, F(1) containing the extramembraneous catalytic core and F(0) containing the membrane proton channel, linked together by a central stalk and a peripheral stalk. During catalysis, ATP synthesis in the catalytic domain of F(1) is coupled via a rotary mechanism of the central stalk subunits to proton translocation. Its function is as follows. Component of the F(0) channel, it forms part of the peripheral stalk, linking F(1) to F(0). The protein is ATP synthase subunit b 1 of Crocosphaera subtropica (strain ATCC 51142 / BH68) (Cyanothece sp. (strain ATCC 51142)).